The following is a 506-amino-acid chain: Cytochrome P450 monooxygenase tpcB (506 aa).

Position 450 (C450) interacts with heme.

It belongs to the cytochrome P450 family. Heme serves as cofactor.

It participates in secondary metabolite biosynthesis; terpenoid biosynthesis. In terms of biological role, cytochrome P450 monooxygenase; part of the gene cluster that mediates the biosynthesis of terpestacin. The bifunctional terpene synthase tpcA converts isopentenyl diphosphate (IPP) and dimethylallyl diphosphate (DMAPP) into the sesterterpene preterpestacin I. The C-terminal prenyltransferase (PT) domain of tpcA catalyzes formation of GFPP, whereas the N-terminal terpene cyclase (TC) domain catalyzes the cyclization of GFPP into preterpestacin I. The cytochrome P450 monooxygenase tpcB then hydroxylates preterpestacin I to yield 24-hydroxypreterpstacin I (renamed as preterpestacin II) whereas the cytochrome P450 monooxygenase tpcC further hydroxylates preterpestacin II to yield 16,17-dihydroxypreterpestacin II (renamed as preterpestacin III). Finally, the FAD-dependent monooxygenase tpcD converts preterpestacin III into terpestacin. The polypeptide is Cytochrome P450 monooxygenase tpcB (Cochliobolus heterostrophus (strain C5 / ATCC 48332 / race O) (Southern corn leaf blight fungus)).